The sequence spans 317 residues: Glucokinase (317 aa).

ATP is bound at residue 6 to 12 (GVDIGGT).

It belongs to the ROK (NagC/XylR) family. Homooligomer (possibly a homotetramer). Alternatively, it may form a heterotetramer of two glucokinase subunits with two ORF2 (AC P40182) proteins.

It is found in the cytoplasm. It carries out the reaction D-glucose + ATP = D-glucose 6-phosphate + ADP + H(+). Functionally, a probable glucose kinase. Required for glucose repression of many different genes, restores glucose kinase activity in E.coli glk mutants. This is Glucokinase (glkA) from Streptomyces coelicolor (strain ATCC BAA-471 / A3(2) / M145).